Reading from the N-terminus, the 314-residue chain is Dihydroorotate dehydrogenase (fumarate) (314 aa).

Substrate contacts are provided by residues Lys-46, 70–74 (NSMGL), and Asn-130. 46–47 (KS) provides a ligand contact to FMN. Asn-130 serves as a coordination point for FMN. Residues Ser-132 and Cys-133 each act as nucleophile in the active site. Residues Lys-167 and Ile-195 each coordinate FMN. Position 196–197 (196–197 (NS)) interacts with substrate. FMN contacts are provided by residues Gly-224, 252-253 (GG), and 274-275 (GT).

It belongs to the dihydroorotate dehydrogenase family. Type 1 subfamily. Homodimer. FMN is required as a cofactor.

The protein resides in the cytoplasm. It catalyses the reaction (S)-dihydroorotate + fumarate = orotate + succinate. It participates in pyrimidine metabolism; UMP biosynthesis via de novo pathway. In terms of biological role, catalyzes the conversion of dihydroorotate to orotate with fumarate as the electron acceptor. The chain is Dihydroorotate dehydrogenase (fumarate) (URA1) from Saccharomyces mikatae (Yeast).